Here is a 561-residue protein sequence, read N- to C-terminus: DNA ligase B (561 aa).

Catalysis depends on Lys-125, which acts as the N6-AMP-lysine intermediate.

Belongs to the NAD-dependent DNA ligase family. LigB subfamily.

The catalysed reaction is NAD(+) + (deoxyribonucleotide)n-3'-hydroxyl + 5'-phospho-(deoxyribonucleotide)m = (deoxyribonucleotide)n+m + AMP + beta-nicotinamide D-nucleotide.. Catalyzes the formation of phosphodiester linkages between 5'-phosphoryl and 3'-hydroxyl groups in double-stranded DNA using NAD as a coenzyme and as the energy source for the reaction. This is DNA ligase B from Salmonella paratyphi A (strain AKU_12601).